A 186-amino-acid polypeptide reads, in one-letter code: ADP-ribosylation factor-like protein 8A (186 aa).

The note=Mediates targeting to membranes intramembrane region spans 1 to 19; that stretch reads MLALFNKLLDWFKALFWKE. Residues 29 to 35, 71 to 75, and 130 to 133 each bind GTP; these read QYSGKTT, DIGGQ, and NKRD.

It belongs to the small GTPase superfamily. Arf family.

The protein localises to the late endosome membrane. It is found in the lysosome membrane. May play a role in lysosomes motility. Alternatively, may play a role in chromosome segregation. The sequence is that of ADP-ribosylation factor-like protein 8A (arl8a) from Xenopus tropicalis (Western clawed frog).